A 551-amino-acid polypeptide reads, in one-letter code: Arginine--tRNA ligase (551 aa).

The short motif at 123–133 (ANPTGPLTIGR) is the 'HIGH' region element.

The protein belongs to the class-I aminoacyl-tRNA synthetase family. In terms of assembly, monomer.

It is found in the cytoplasm. It carries out the reaction tRNA(Arg) + L-arginine + ATP = L-arginyl-tRNA(Arg) + AMP + diphosphate. The sequence is that of Arginine--tRNA ligase from Chlorobium phaeobacteroides (strain DSM 266 / SMG 266 / 2430).